We begin with the raw amino-acid sequence, 253 residues long: Triosephosphate isomerase, cytosolic (253 aa).

Residues asparagine 10 and lysine 12 each contribute to the substrate site. Catalysis depends on histidine 96, which acts as the Electrophile. Glutamate 166 acts as the Proton acceptor in catalysis.

It belongs to the triosephosphate isomerase family. Homodimer. Starchy endosperm.

The protein localises to the cytoplasm. It carries out the reaction D-glyceraldehyde 3-phosphate = dihydroxyacetone phosphate. It participates in carbohydrate biosynthesis; gluconeogenesis. It functions in the pathway carbohydrate degradation; glycolysis; D-glyceraldehyde 3-phosphate from glycerone phosphate: step 1/1. In Hordeum vulgare (Barley), this protein is Triosephosphate isomerase, cytosolic.